The primary structure comprises 93 residues: Precursor of CEP13 (93 aa).

A signal peptide spans 1–27 (MARPRISISMICLLILIVGFVLQSSQA). Residues 28–78 (RKVLVPYGTSKGLFLSALPKGNVPPSGPSDKGHTSPPDDTDQRMVPENSPE) constitute a propeptide that is removed on maturation. Residues 45–93 (LPKGNVPPSGPSDKGHTSPPDDTDQRMVPENSPEIYRRLESVPSPGVGH) are disordered. P87 and P89 each carry hydroxyproline.

This sequence belongs to the C-terminally encoded plant signaling peptide (CEP) family. As to quaternary structure, interacts with CEP receptors (e.g. CEPR1 and CEPR2). In terms of processing, the mature small signaling peptide is generated by proteolytic processing of the longer precursor.

It localises to the secreted. Its subcellular location is the extracellular space. It is found in the apoplast. Extracellular signaling peptide that may regulate primary root growth rate and systemic nitrogen (N)-demand signaling. This is Precursor of CEP13 from Arabidopsis thaliana (Mouse-ear cress).